A 228-amino-acid chain; its full sequence is Ribose-5-phosphate isomerase A (228 aa).

Residues 29–32 (TGST), 85–88 (DGAD), and 98–101 (KGGG) contribute to the substrate site. Glu-107 serves as the catalytic Proton acceptor. Lys-125 contributes to the substrate binding site.

The protein belongs to the ribose 5-phosphate isomerase family. As to quaternary structure, homodimer.

The enzyme catalyses aldehydo-D-ribose 5-phosphate = D-ribulose 5-phosphate. It participates in carbohydrate degradation; pentose phosphate pathway; D-ribose 5-phosphate from D-ribulose 5-phosphate (non-oxidative stage): step 1/1. In terms of biological role, catalyzes the reversible conversion of ribose-5-phosphate to ribulose 5-phosphate. The sequence is that of Ribose-5-phosphate isomerase A from Staphylococcus aureus (strain COL).